The following is a 431-amino-acid chain: MAKIINIIGREIMDSRGNPTVEAEVHLEGGFMGMAAAPSGASTGSREALELRDGDKARYMGKGVLKAVENINGLIRDALMGKDATAQAELDQIMIDVDGTENKDKLGANAILAVSLAAAKAAAAFKGVPLYAHIADLNGTPGQYSMPVPMMNILNGGEHADNNVDIQEFMVQPVGAKSFREALRMGAEIFHSLKSVLKSKGLSTSVGDEGGFAPDLASNADALAIIKVAVEQAGYTLGTDVTLALDCAASEFYKDGQYDLSGEGKVFSANGFSDFLKSLTEQYPIASIEDGLDESDWDGWAYQTQIMGDKIQLVGDDLFVTNTKILKRGIDNGIANSILIKFNQIGSLTETLAAIRMAKEAGYTVVISHRSGETEDATIADLAVATSAGQIKTGSLCRSDRVAKYNQLLRIEEQLGEKAPYNGLKEIKGQA.

Residue glutamine 167 coordinates (2R)-2-phosphoglycerate. Residue glutamate 209 is the Proton donor of the active site. Mg(2+)-binding residues include aspartate 246, glutamate 289, and aspartate 316. (2R)-2-phosphoglycerate contacts are provided by lysine 341, arginine 370, serine 371, and lysine 392. The active-site Proton acceptor is lysine 341.

Belongs to the enolase family. As to quaternary structure, component of the RNA degradosome, a multiprotein complex involved in RNA processing and mRNA degradation. Mg(2+) is required as a cofactor.

It localises to the cytoplasm. Its subcellular location is the secreted. The protein localises to the cell surface. It catalyses the reaction (2R)-2-phosphoglycerate = phosphoenolpyruvate + H2O. Its pathway is carbohydrate degradation; glycolysis; pyruvate from D-glyceraldehyde 3-phosphate: step 4/5. Functionally, catalyzes the reversible conversion of 2-phosphoglycerate (2-PG) into phosphoenolpyruvate (PEP). It is essential for the degradation of carbohydrates via glycolysis. The protein is Enolase of Shewanella pealeana (strain ATCC 700345 / ANG-SQ1).